Consider the following 109-residue polypeptide: U4-lycotoxin-Ls1d (109 aa).

The first 22 residues, 1–22 (MKVLVLFSVLFLTLFSYSSTEA), serve as a signal peptide directing secretion. The propeptide occupies 23–44 (MDEFDSDAEEDMLSLMANEQVR). Positions 45–88 (AKACTPRLHDCSHDRHSCCRGELFKDVCYCFYPEGEDKTEVCSC) are knottin domain. Disulfide bonds link C48/C63, C55/C72, C62/C88, and C74/C86. Positions 89-108 (QQPKSHKYIEKVVDKARTVV) are linear cationic cytotoxin domain.

The protein belongs to the neurotoxin 19 (CSTX) family. 05 (U4-Lctx) subfamily. Expressed by the venom gland.

It localises to the secreted. Enhances the high-affinity desensitization of human P2RX3 purinoceptors. This is U4-lycotoxin-Ls1d from Lycosa singoriensis (Wolf spider).